The chain runs to 178 residues: Large ribosomal subunit protein uL6 (178 aa).

Belongs to the universal ribosomal protein uL6 family. In terms of assembly, part of the 50S ribosomal subunit.

In terms of biological role, this protein binds to the 23S rRNA, and is important in its secondary structure. It is located near the subunit interface in the base of the L7/L12 stalk, and near the tRNA binding site of the peptidyltransferase center. This chain is Large ribosomal subunit protein uL6, found in Corynebacterium glutamicum (strain R).